The sequence spans 196 residues: DnaA initiator-associating protein DiaA (196 aa).

Residues 34–196 (LVQSLLNGNK…DNTLFPHQDD (163 aa)) form the SIS domain.

The protein belongs to the SIS family. DiaA subfamily. In terms of assembly, homotetramer; dimer of dimers.

Functionally, required for the timely initiation of chromosomal replication via direct interactions with the DnaA initiator protein. This chain is DnaA initiator-associating protein DiaA, found in Klebsiella pneumoniae (strain 342).